The primary structure comprises 194 residues: RNA polymerase II subunit A C-terminal domain phosphatase SSU72 like protein 4 (194 aa).

The protein belongs to the SSU72 phosphatase family.

The protein resides in the nucleus. The catalysed reaction is O-phospho-L-seryl-[protein] + H2O = L-seryl-[protein] + phosphate. The enzyme catalyses O-phospho-L-threonyl-[protein] + H2O = L-threonyl-[protein] + phosphate. Functionally, protein phosphatase that catalyzes the dephosphorylation of the C-terminal domain of RNA polymerase II. Plays a role in RNA processing and termination. The chain is RNA polymerase II subunit A C-terminal domain phosphatase SSU72 like protein 4 from Homo sapiens (Human).